The primary structure comprises 90 residues: uncharacterized protein (90 aa).

This is an uncharacterized protein from Escherichia coli (strain K12).